A 101-amino-acid polypeptide reads, in one-letter code: Small ribosomal subunit protein bS18c (101 aa).

It belongs to the bacterial ribosomal protein bS18 family. Part of the 30S ribosomal subunit.

The protein localises to the plastid. It is found in the chloroplast. This chain is Small ribosomal subunit protein bS18c, found in Eucalyptus globulus subsp. globulus (Tasmanian blue gum).